Consider the following 347-residue polypeptide: Uroporphyrinogen decarboxylase (347 aa).

Substrate-binding positions include 24–28 (RQAGR), Asp74, Tyr145, Ser200, and His315.

It belongs to the uroporphyrinogen decarboxylase family. As to quaternary structure, homodimer.

The protein localises to the cytoplasm. The enzyme catalyses uroporphyrinogen III + 4 H(+) = coproporphyrinogen III + 4 CO2. It functions in the pathway porphyrin-containing compound metabolism; protoporphyrin-IX biosynthesis; coproporphyrinogen-III from 5-aminolevulinate: step 4/4. Its function is as follows. Catalyzes the decarboxylation of four acetate groups of uroporphyrinogen-III to yield coproporphyrinogen-III. This chain is Uroporphyrinogen decarboxylase, found in Hydrogenobaculum sp. (strain Y04AAS1).